Consider the following 82-residue polypeptide: Lectin-D2 (82 aa).

Chitin-binding type-1 domains lie at 1–42 (APEC…QCDY) and 43–82 (WRCGRDFGGRLCEEDMCCSKYGWCGYSDDHCEDGCQSQCD). Disulfide bonds link cysteine 4–cysteine 19, cysteine 13–cysteine 25, cysteine 18–cysteine 32, and cysteine 36–cysteine 40. Residues serine 20, tryptophan 22, tyrosine 24, and tyrosine 31 each coordinate a carbohydrate. Position 43 (tryptophan 43) interacts with a carbohydrate. 4 disulfide bridges follow: cysteine 45/cysteine 60, cysteine 54/cysteine 66, cysteine 59/cysteine 73, and cysteine 77/cysteine 81. A carbohydrate is bound by residues serine 61, tyrosine 63, tryptophan 65, and histidine 72.

In terms of assembly, monomer.

In terms of biological role, N-acetyl-D-glucosamine binding lectin. Shows no hemagglutinating activity towards rabbit erythrocytes and weak activity towards trypsin-treated erythrocytes. Has mitogenic activity towards human peripheral blood lymphocytes (HPBL). The polypeptide is Lectin-D2 (Phytolacca americana (American pokeweed)).